The chain runs to 61 residues: Small ribosomal subunit protein uS14 (61 aa).

The Zn(2+) site is built by C24, C27, C40, and C43.

The protein belongs to the universal ribosomal protein uS14 family. Zinc-binding uS14 subfamily. Part of the 30S ribosomal subunit. Contacts proteins S3 and S10. It depends on Zn(2+) as a cofactor.

Functionally, binds 16S rRNA, required for the assembly of 30S particles and may also be responsible for determining the conformation of the 16S rRNA at the A site. This chain is Small ribosomal subunit protein uS14, found in Moorella thermoacetica (strain ATCC 39073 / JCM 9320).